Reading from the N-terminus, the 319-residue chain is MKPENKLPVLDLISAEMKTVVNTLQSDLPSWPATGTIAEQRQYYTLERRFWNAGAPEMATRAYMVPTKYGQVETRLFCPQPDSPATLFYLHGGGFILGNLDTHDRIMRLLASYSQCTVIGIDYPLSPEARFPQAIEEIVAACCYFHQQAEDYQINMSRIGFAGDSAGAMLTLASALWLRDKQIDCGKIAGVLLWYGLYGLRDSVTRRLLGGVWDGLTQQDLQMYEEAYLSNDADRESPYYCLFNNDLTREVPPCFIAGAEFDPLLDDSRLLYQTLAAHQQPCEFKLYPGTLHAFLHYSRMMKTADEALRDGAQFFTAQL.

The Involved in the stabilization of the negatively charged intermediate by the formation of the oxyanion hole motif lies at 91–93; the sequence is HGG. Catalysis depends on residues S165, D262, and H292.

Belongs to the 'GDXG' lipolytic enzyme family. As to quaternary structure, homodimer. Interacts with MalT and MelA.

The protein resides in the cytoplasm. Displays esterase activity towards short chain fatty esters (acyl chain length of up to 8 carbons). Able to hydrolyze triacetylglycerol (triacetin) and tributyrylglycerol (tributyrin), but not trioleylglycerol (triolein) or cholesterol oleate. Negatively regulates MalT activity by antagonizing maltotriose binding. Inhibits MelA galactosidase activity. The chain is Acetyl esterase from Escherichia coli O139:H28 (strain E24377A / ETEC).